Consider the following 182-residue polypeptide: Probable peptidyl-prolyl cis-trans isomerase A (182 aa).

The PPIase cyclophilin-type domain maps to 13-181 (QNATATLHTN…EPVVIDSITI (169 aa)). The tract at residues 161 to 182 (TTATDGNDRPTEPVVIDSITIS) is disordered.

This sequence belongs to the cyclophilin-type PPIase family.

It localises to the cytoplasm. It catalyses the reaction [protein]-peptidylproline (omega=180) = [protein]-peptidylproline (omega=0). Functionally, PPIases accelerate the folding of proteins. It catalyzes the cis-trans isomerization of proline imidic peptide bonds in oligopeptides. This is Probable peptidyl-prolyl cis-trans isomerase A (ppiA) from Mycobacterium leprae (strain TN).